Here is a 1183-residue protein sequence, read N- to C-terminus: Formin-like protein (1183 aa).

2 disordered regions span residues 1–44 (MGAV…SISS) and 63–82 (QHVR…PTTD). Residues 23 to 36 (PHSHAHHHSMRNGH) show a composition bias toward basic residues. The span at 63–79 (QHVRQPSLRSRSQQPMP) shows a compositional bias: polar residues. Positions 76-559 (QPMPTTDELD…HNEQELKKRD (484 aa)) constitute a GBD/FH3 domain. The residue at position 225 (Ser225) is a Phosphoserine. Positions 572–584 (LSRSLPRSASSGD) are enriched in polar residues. The disordered stretch occupies residues 572 to 681 (LSRSLPRSAS…PPVAGFMPAP (110 aa)). Pro residues-rich tracts occupy residues 605–614 (LPPPPPPMPA) and 622–640 (APPP…PPGF). The span at 641–654 (SPLGSPSGSLASTA) shows a compositional bias: low complexity. In terms of domain architecture, FH2 spans 687 to 1088 (IKRKVPTKYK…AALAASKKEN (402 aa)). A DAD domain is found at 1136 to 1169 (DEVYNGALEDILLGLKSEPYRRADAVRRSQRRRI).

Belongs to the formin homology family. In terms of assembly, self-associates. Interacts (via GBD/FH3 domain) with Cdc42; the interaction is stronger with the GTP bound form of Cdc42.

Together with Cdc42, involved in establishment of planar cell polarity in the developing compound eye by contributing to ommatidial rotation. Together with DAAM and Cdc42, has a role in neuronal development of mushroom bodies. The protein is Formin-like protein of Drosophila melanogaster (Fruit fly).